A 195-amino-acid chain; its full sequence is Protein GrpE (195 aa).

Over residues 1 to 20 the composition is skewed to basic and acidic residues; sequence MSSKEQKTPDEQVLDQKEAA. The segment at 1 to 40 is disordered; that stretch reads MSSKEQKTPDEQVLDQKEAAKGQQADAAPETADVADPRDA.

Belongs to the GrpE family. In terms of assembly, homodimer.

It localises to the cytoplasm. Functionally, participates actively in the response to hyperosmotic and heat shock by preventing the aggregation of stress-denatured proteins, in association with DnaK and GrpE. It is the nucleotide exchange factor for DnaK and may function as a thermosensor. Unfolded proteins bind initially to DnaJ; upon interaction with the DnaJ-bound protein, DnaK hydrolyzes its bound ATP, resulting in the formation of a stable complex. GrpE releases ADP from DnaK; ATP binding to DnaK triggers the release of the substrate protein, thus completing the reaction cycle. Several rounds of ATP-dependent interactions between DnaJ, DnaK and GrpE are required for fully efficient folding. The protein is Protein GrpE of Pectobacterium carotovorum subsp. carotovorum (strain PC1).